Reading from the N-terminus, the 547-residue chain is MGPHAGPGMLLLLLGFLRISAAKYVRGNLTTKEDWVFLTRFCFLSDYGRLEFKFKYPEAKCCQNILLYFDDTSQWPAVYKKDNKDCLMKESVIRPENNQVINLTTQYVWSGCQVIKEAGQSYLSCNSGRSFRSVRERWWYIALSKCGGDGLQLEYEMTLTNGKSFWTRHFSADEFGILETDITFLLIFILILLLSCYFGYILRGRQLLHTTYKMFMAAAGVEVLSLLLFCVYWGQYAQDGVGNSSIKVLAKLLFSASFLIFLLMLILLGKGFTVTRGRISHLGSIKLSVYMTLYTVTHTVLFIHEAQFFDPAQVLYTYESPAGYGNIALQFLAYIWFCYAVLVTLKHFPEKQAFYVPFFAAYTLWFFAVPVMALIANFGIPKWAREKIVNGIQLGIHLYAHAVFLIITRPSAANKNFPYHVRTSQIGIMEQSTEKFPHHVYGNVTFISDSVPNVTELFSIPSSNGSSAGITKPVPYPVTLGQCYSQLTSDSHQVISPPLLNGVPGVQKVPVGETQLGGLQQLHAPQIHHQNGFPEYFSIRSAGPQPM.

Residues 2 to 22 (GPHAGPGMLLLLLGFLRISAA) form a helical membrane-spanning segment. N-linked (GlcNAc...) asparagine glycosylation is found at Asn-28 and Asn-102. 2 helical membrane-spanning segments follow: residues 182–202 (ITFLLIFILILLLSCYFGYIL) and 214–234 (MFMAAAGVEVLSLLLFCVYWG). Asn-243 carries N-linked (GlcNAc...) asparagine glycosylation. 5 helical membrane passes run 248–268 (VLAKLLFSASFLIFLLMLILL), 283–303 (GSIKLSVYMTLYTVTHTVLFI), 325–345 (GNIALQFLAYIWFCYAVLVTL), 356–376 (VPFFAAYTLWFFAVPVMALIA), and 388–408 (IVNGIQLGIHLYAHAVFLIIT). N-linked (GlcNAc...) asparagine glycosylation is found at Asn-443, Asn-453, and Asn-464.

Its subcellular location is the membrane. The polypeptide is Transmembrane protein 145 (tmem145) (Xenopus laevis (African clawed frog)).